A 217-amino-acid chain; its full sequence is MESVALYSFQATESDELAFNKGDTLKILNMEDDQNWYKAELRGVEGFIPKNYIRVKPHPWYSGRISRQLAEEILMKRNHLGAFLIRESESSPGEFSVSVNYGDQVQHFKVLREASGKYFLWEEKFNSLNELVDFYRTTTIAKKRQIFLRDEEPLLKSPGACFAQAQFDFSAQDPSQLSFRRGDIIEVLERPDPHWWRGRSCGRVGFFPRSYVQPVHL.

The SH3 1 domain occupies 1–58 (MESVALYSFQATESDELAFNKGDTLKILNMEDDQNWYKAELRGVEGFIPKNYIRVKPH). Positions 60 to 154 (WYSGRISRQL…QIFLRDEEPL (95 aa)) constitute an SH2 domain. The 60-residue stretch at 158–217 (PGACFAQAQFDFSAQDPSQLSFRRGDIIEVLERPDPHWWRGRSCGRVGFFPRSYVQPVHL) folds into the SH3 2 domain.

Belongs to the GRB2/sem-5/DRK family. In terms of assembly, associates through its SH2 domain with ligand-activated receptors for stem cell factor (KIT) and erythropoietin (EPOR). Also forms a stable complex with the Bcr-Abl oncoprotein. GRAP is associated with the Ras guanine nucleotide exchange factor SOS1, primarily through its N-terminal SH3 domain. Interacts with phosphorylated LAT upon TCR activation. Interacts with SHB.

It is found in the membrane. It localises to the synapse. Its function is as follows. Couples signals from receptor and cytoplasmic tyrosine kinases to the Ras signaling pathway. Plays a role in the inner ear and in hearing. The sequence is that of GRB2-related adapter protein from Homo sapiens (Human).